Reading from the N-terminus, the 88-residue chain is Small ribosomal subunit protein bS16 (88 aa).

Belongs to the bacterial ribosomal protein bS16 family.

The chain is Small ribosomal subunit protein bS16 from Anaeromyxobacter sp. (strain Fw109-5).